A 733-amino-acid polypeptide reads, in one-letter code: Methylmalonyl-CoA mutase large subunit (733 aa).

Acidic residues predominate over residues 1-10 (MRIPEFDDIE). Residues 1–22 (MRIPEFDDIELGAGGGPSGSAE) are disordered. Residues tyrosine 78, methionine 81, threonine 88, arginine 90, tyrosine 92, and serine 117 each coordinate (R)-methylmalonyl-CoA. Phenylalanine 120 and alanine 142 together coordinate cob(II)alamin. Threonine 198 and glutamine 200 together coordinate (R)-methylmalonyl-CoA. Cob(II)alamin-binding residues include valine 209 and arginine 210. (R)-methylmalonyl-CoA is bound by residues arginine 210, histidine 247, arginine 286, and serine 288. Residues glycine 336, glutamate 373, alanine 376, glycine 612, histidine 613, aspartate 614, arginine 615, serine 658, leucine 660, glycine 689, and threonine 712 each contribute to the cob(II)alamin site. Residues 600–732 (RPRILVAKMG…KRLAADLGHE (133 aa)) enclose the B12-binding domain.

Belongs to the methylmalonyl-CoA mutase family. Heterodimer of an alpha and a beta chain. The cofactor is adenosylcob(III)alamin.

The enzyme catalyses (R)-methylmalonyl-CoA = succinyl-CoA. Its function is as follows. Catalyzes the isomerization of succinyl-CoA to methylmalonyl-CoA during synthesis of propionate from tricarboxylic acid-cycle intermediates. This conversion most likely represents an important source of building blocks for polyketide antibiotic biosynthesis. It is unable to catalyze the conversion of isobutyryl-CoA into N-butyryl-CoA. The sequence is that of Methylmalonyl-CoA mutase large subunit (mutB) from Streptomyces virginiae (Streptomyces cinnamonensis).